Here is a 360-residue protein sequence, read N- to C-terminus: Peptide chain release factor 1 (360 aa).

N5-methylglutamine is present on Q237.

Belongs to the prokaryotic/mitochondrial release factor family. Methylated by PrmC. Methylation increases the termination efficiency of RF1.

The protein localises to the cytoplasm. Its function is as follows. Peptide chain release factor 1 directs the termination of translation in response to the peptide chain termination codons UAG and UAA. The sequence is that of Peptide chain release factor 1 from Pseudomonas fluorescens (strain ATCC BAA-477 / NRRL B-23932 / Pf-5).